A 299-amino-acid polypeptide reads, in one-letter code: UDP-3-O-acyl-N-acetylglucosamine deacetylase (299 aa).

Residues H75, H232, and D236 each contribute to the Zn(2+) site. Catalysis depends on H259, which acts as the Proton donor.

This sequence belongs to the LpxC family. Zn(2+) serves as cofactor.

The catalysed reaction is a UDP-3-O-[(3R)-3-hydroxyacyl]-N-acetyl-alpha-D-glucosamine + H2O = a UDP-3-O-[(3R)-3-hydroxyacyl]-alpha-D-glucosamine + acetate. Its pathway is glycolipid biosynthesis; lipid IV(A) biosynthesis; lipid IV(A) from (3R)-3-hydroxytetradecanoyl-[acyl-carrier-protein] and UDP-N-acetyl-alpha-D-glucosamine: step 2/6. Catalyzes the hydrolysis of UDP-3-O-myristoyl-N-acetylglucosamine to form UDP-3-O-myristoylglucosamine and acetate, the committed step in lipid A biosynthesis. This chain is UDP-3-O-acyl-N-acetylglucosamine deacetylase, found in Helicobacter hepaticus (strain ATCC 51449 / 3B1).